Reading from the N-terminus, the 512-residue chain is PTS system mannitol-specific EIICB component (512 aa).

The Cytoplasmic segment spans residues 1 to 28; the sequence is MSQTEEKKGIGRRVQAFGSFLSSMIMPN. A PTS EIIC type-2 domain is found at 17-349; it reads FGSFLSSMIM…MKFTREPKQD (333 aa). Residues 29-50 form a helical membrane-spanning segment; sequence IGAFIAWGFIAAIFIDNGWLPN. Topologically, residues 51 to 54 are extracellular; the sequence is KDLA. A helical membrane pass occupies residues 55-75; it reads TLAGPMITYLIPLLIAFSGGR. Residues 76-139 are Cytoplasmic-facing; the sequence is LIYDLRGGII…QGFEMLFNNF (64 aa). The chain crosses the membrane as a helical span at residues 140–161; the sequence is SAGILGFIMTIAGFKILAPLMK. Over 162–170 the chain is Extracellular; sequence FIMHILSVA. A helical transmembrane segment spans residues 171-191; sequence VEALVHAHLLPLVSILVEPAK. At 192-278 the chain is on the cytoplasmic side; the sequence is IVFLNNAINH…VLMRPLLFIA (87 aa). Residues 279 to 298 form a helical membrane-spanning segment; it reads VILGGMTGVATYQATGFGFK. Over 299-318 the chain is Extracellular; sequence SPASPGSFIVYCLNAPRGEF. A helical transmembrane segment spans residues 319 to 340; the sequence is LHMLLGVFLAALVSFVVAALIM. Residues 341–512 are Cytoplasmic-facing; that stretch reads KFTREPKQDL…LNNLKKDDQA (172 aa). Residues 355–402 are disordered; the sequence is AQMENTKGKKSSVASKLVSSDKNVNTEENASGNVSETSSSDDDPEALL. The segment covering 365-376 has biased composition (low complexity); it reads SSVASKLVSSDK. Over residues 380-392 the composition is skewed to polar residues; it reads TEENASGNVSETS. Residues 419 to 512 enclose the PTS EIIB type-2 domain; it reads NHVIFACDAG…LNNLKKDDQA (94 aa). C425 (phosphocysteine intermediate; for EIIB activity) is an active-site residue. C425 carries the phosphocysteine; by EIIA modification.

As to quaternary structure, homodimer.

It is found in the cell membrane. The enzyme catalyses D-mannitol(out) + N(pros)-phospho-L-histidyl-[protein] = D-mannitol 1-phosphate(in) + L-histidyl-[protein]. Its function is as follows. The phosphoenolpyruvate-dependent sugar phosphotransferase system (sugar PTS), a major carbohydrate active transport system, catalyzes the phosphorylation of incoming sugar substrates concomitantly with their translocation across the cell membrane. The enzyme II CmtAB PTS system is involved in D-mannitol transport. This Staphylococcus aureus (strain Mu50 / ATCC 700699) protein is PTS system mannitol-specific EIICB component (mtlA).